A 353-amino-acid polypeptide reads, in one-letter code: MTDRFQQLLASIKPVDMNLTSTVKAHLDDLTKPQGSLGRLEEIVMKYCIATGTTKPSLSKKKVFCFAGDHGVAAEGVSAFPAEVTPQMVYNMLGGGAAINVLSRHAGADLEVVDMGVNHDFAEHPMLRRCKVKHGSANMAEGPAMSIEETLQAIMAGAELAIEARNQGYELLATGEMGIANTTPATALYATLLGLPVEAITGRGTGIDDERLHHKVAVIEKAIEVNRANLATPLEVLAALGGFEIAGICGLILGAASVGMPVVVDGFISSSAAVCAIKLSCTVSDYLFFSHLSNEQGHRAVMQKLGARPILDLDLRLGEGTGAAMAMQVIEASVKIYNEMATFSSAGVSGKND.

The active-site Proton acceptor is Glu319.

Belongs to the CobT family.

The enzyme catalyses 5,6-dimethylbenzimidazole + nicotinate beta-D-ribonucleotide = alpha-ribazole 5'-phosphate + nicotinate + H(+). It functions in the pathway nucleoside biosynthesis; alpha-ribazole biosynthesis; alpha-ribazole from 5,6-dimethylbenzimidazole: step 1/2. Its function is as follows. Catalyzes the synthesis of alpha-ribazole-5'-phosphate from nicotinate mononucleotide (NAMN) and 5,6-dimethylbenzimidazole (DMB). In Chlorobaculum tepidum (strain ATCC 49652 / DSM 12025 / NBRC 103806 / TLS) (Chlorobium tepidum), this protein is Nicotinate-nucleotide--dimethylbenzimidazole phosphoribosyltransferase.